The following is a 335-amino-acid chain: tRNA-dihydrouridine(20/20a) synthase (335 aa).

FMN-binding positions include 19-21 (PMM) and Gln72. Cys102 functions as the Proton donor in the catalytic mechanism. FMN is bound by residues Lys141, His173, 213-215 (NGG), and 235-236 (GR).

This sequence belongs to the Dus family. DusA subfamily. Requires FMN as cofactor.

It catalyses the reaction 5,6-dihydrouridine(20) in tRNA + NADP(+) = uridine(20) in tRNA + NADPH + H(+). The catalysed reaction is 5,6-dihydrouridine(20) in tRNA + NAD(+) = uridine(20) in tRNA + NADH + H(+). It carries out the reaction 5,6-dihydrouridine(20a) in tRNA + NADP(+) = uridine(20a) in tRNA + NADPH + H(+). The enzyme catalyses 5,6-dihydrouridine(20a) in tRNA + NAD(+) = uridine(20a) in tRNA + NADH + H(+). Catalyzes the synthesis of 5,6-dihydrouridine (D), a modified base found in the D-loop of most tRNAs, via the reduction of the C5-C6 double bond in target uridines. Specifically modifies U20 and U20a in tRNAs. The chain is tRNA-dihydrouridine(20/20a) synthase from Xanthomonas campestris pv. campestris (strain ATCC 33913 / DSM 3586 / NCPPB 528 / LMG 568 / P 25).